A 123-amino-acid chain; its full sequence is MQNKIQVKSVEKRENALIFCAENSEIEVKGLSARNHVLVDSDNLSFLYILENESSFIYVSIPHTCWEAMHEAMNNDVVMFVRVNDIEMELEGLKEEVEYLVENIEGNANYGEELVTAVEKVFL.

This sequence belongs to the UPF0738 family.

In Bacillus thuringiensis (strain Al Hakam), this protein is UPF0738 protein BALH_1059.